The primary structure comprises 468 residues: Protein ABHD15 (468 aa).

The N-terminal stretch at 1 to 23 (MPPWGAALALILAVLALLGLLGP) is a signal peptide. The interval 33 to 61 (VGERTLPGAQDRDDGEEADGGGPADQFSD) is disordered. Active-site charge relay system residues include D360 and H391. Position 434 is a phosphoserine (S434).

Belongs to the AB hydrolase superfamily. AB hydrolase 4 family. As to quaternary structure, interacts with PDE3B; this interaction regulates PDE3B's stability and expression and, thereby, impacts the antilipolytic action of insulin.

It localises to the secreted. Its function is as follows. May regulate adipocyte lipolysis and liver lipid accumulation. The protein is Protein ABHD15 of Homo sapiens (Human).